The following is a 100-amino-acid chain: Urease subunit gamma (100 aa).

It belongs to the urease gamma subunit family. Heterotrimer of UreA (gamma), UreB (beta) and UreC (alpha) subunits. Three heterotrimers associate to form the active enzyme.

It is found in the cytoplasm. The catalysed reaction is urea + 2 H2O + H(+) = hydrogencarbonate + 2 NH4(+). It functions in the pathway nitrogen metabolism; urea degradation; CO(2) and NH(3) from urea (urease route): step 1/1. This is Urease subunit gamma from Burkholderia thailandensis (strain ATCC 700388 / DSM 13276 / CCUG 48851 / CIP 106301 / E264).